The chain runs to 138 residues: Actophorin (138 aa).

An ADF-H domain is found at 3–134 (GIQLADEVTS…NLDEVIAKVK (132 aa)).

The protein belongs to the actin-binding proteins ADF family. Interacts with F-actin. Does not interact with G-actin. Interacts with 14-3-3 protein 3.

It is found in the cytoplasm. The protein localises to the cytoskeleton. It localises to the cell membrane. The protein resides in the cell projection. Its subcellular location is the phagocytic cup. It is found in the pseudopodium. Its function is as follows. Actin-binding protein that severs actin filaments. The protein is Actophorin of Entamoeba histolytica (strain ATCC 30459 / HM-1:IMSS / ABRM).